We begin with the raw amino-acid sequence, 541 residues long: MFGGYETIEAFEDDLYRDDSSSELSVDSEVEFQLYSQVHYAQSIHNANKEEGYEEKNCENSETVSSQPNQKNLIVLSDSEVIQLSDTSEVITLSDEDSIYRCKRKNIEVQAEEKTQSPATSHSNKVAQKCKRNNKKPKPEERPGVIREVMIIEVSSNEEEESTTSENENVESWMLLGSEEDGKDNDILLNLVGCETAGAEDDVNWFISDKDIEAKIDNNRSSGRWNNRYYSVNKNVTCRNCDKRGHLSKNCPLPQKVRACCLCSERGHLQYGCPARYCLDCSLPMSSNHRCFERLSWRKRCDRCDMIGHHADACPEIWRQYHLTTKPGPPKKPKTPSGQSALVYCYNCAQKGHYGHECTERRMFNQTFPTSPFIYCYDGKYDIQQRDRRIKRKVKDLKKNGDFPRQFKRPHVEETDKRRHHDMRKSRSPRKYRRWPRENKETQKEKTRSREGKTHRRGHQPRGEDEDFPRGSKPNASGCANNQKPSKSLHHASHYHRLREERLLRESKRSKPKKRKSTEDGSHDDLFLIKQKKKKPKPSGL.

The interval 111 to 144 (AEEKTQSPATSHSNKVAQKCKRNNKKPKPEERPG) is disordered. A compositionally biased stretch (polar residues) spans 116–126 (QSPATSHSNKV). Glycyl lysine isopeptide (Lys-Gly) (interchain with G-Cter in SUMO2) cross-links involve residues lysine 129, lysine 136, lysine 138, lysine 234, and lysine 249. 3 consecutive CCHC-type zinc fingers follow at residues 236 to 253 (VTCR…NCPL), 258 to 275 (RACC…GCPA), and 299 to 316 (KRCD…ACPE). Residue lysine 334 forms a Glycyl lysine isopeptide (Lys-Gly) (interchain with G-Cter in SUMO2) linkage. The CCHC-type 4 zinc finger occupies 343–360 (VYCYNCAQKGHYGHECTE). Residues 394 to 541 (VKDLKKNGDF…KKKKPKPSGL (148 aa)) are disordered. Glycyl lysine isopeptide (Lys-Gly) (interchain with G-Cter in SUMO2) cross-links involve residues lysine 408 and lysine 431. Residues 418-434 (RRHHDMRKSRSPRKYRR) are compositionally biased toward basic residues. Over residues 435–452 (WPRENKETQKEKTRSREG) the composition is skewed to basic and acidic residues. A Glycyl lysine isopeptide (Lys-Gly) (interchain with G-Cter in SUMO2) cross-link involves residue lysine 473. Over residues 474–486 (PNASGCANNQKPS) the composition is skewed to polar residues. Phosphoserine is present on serine 477. Glycyl lysine isopeptide (Lys-Gly) (interchain with G-Cter in SUMO2) cross-links involve residues lysine 484 and lysine 487. Positions 487–497 (KSLHHASHYHR) are enriched in basic residues. Composition is skewed to basic and acidic residues over residues 498–509 (LREERLLRESKR) and 517–527 (STEDGSHDDLF). Lysine 530 participates in a covalent cross-link: Glycyl lysine isopeptide (Lys-Gly) (interchain with G-Cter in SUMO2). Over residues 530–541 (KQKKKKPKPSGL) the composition is skewed to basic residues.

As to quaternary structure, component of a nucleolar TRAMP-like complex, an ATP-dependent exosome regulatory complex consisting of a helicase (MTREX), an oligadenylate polymerase (TENT4B or TENT4A), and a substrate specific RNA-binding factor (ZCCHC7 or ZCCHC8). Several TRAMP-like complexes exist with specific compositions and are associated with nuclear, or nucleolar RNA exosomes.

The protein localises to the nucleus. It localises to the nucleolus. The sequence is that of Zinc finger CCHC domain-containing protein 7 (Zcchc7) from Mus musculus (Mouse).